The following is a 657-amino-acid chain: Glycogen debranching enzyme (657 aa).

Residue aspartate 336 is the Nucleophile of the active site. Glutamate 371 (proton donor) is an active-site residue. The tract at residues 460–481 (ANGEENRDGTNNNYSNNHGKEG) is disordered.

This sequence belongs to the glycosyl hydrolase 13 family.

The enzyme catalyses Hydrolysis of (1-&gt;6)-alpha-D-glucosidic linkages to branches with degrees of polymerization of three or four glucose residues in limit dextrin.. It functions in the pathway glycan degradation; glycogen degradation. Its function is as follows. Removes maltotriose and maltotetraose chains that are attached by 1,6-alpha-linkage to the limit dextrin main chain, generating a debranched limit dextrin. The sequence is that of Glycogen debranching enzyme from Escherichia coli O157:H7.